The sequence spans 384 residues: 4-hydroxy-3-methylbut-2-en-1-yl diphosphate synthase (flavodoxin) (384 aa).

[4Fe-4S] cluster-binding residues include Cys272, Cys275, Cys307, and Glu314.

It belongs to the IspG family. It depends on [4Fe-4S] cluster as a cofactor.

The catalysed reaction is (2E)-4-hydroxy-3-methylbut-2-enyl diphosphate + oxidized [flavodoxin] + H2O + 2 H(+) = 2-C-methyl-D-erythritol 2,4-cyclic diphosphate + reduced [flavodoxin]. It functions in the pathway isoprenoid biosynthesis; isopentenyl diphosphate biosynthesis via DXP pathway; isopentenyl diphosphate from 1-deoxy-D-xylulose 5-phosphate: step 5/6. In terms of biological role, converts 2C-methyl-D-erythritol 2,4-cyclodiphosphate (ME-2,4cPP) into 1-hydroxy-2-methyl-2-(E)-butenyl 4-diphosphate. The chain is 4-hydroxy-3-methylbut-2-en-1-yl diphosphate synthase (flavodoxin) from Rhodospirillum rubrum (strain ATCC 11170 / ATH 1.1.1 / DSM 467 / LMG 4362 / NCIMB 8255 / S1).